A 172-amino-acid chain; its full sequence is NAD(P)H-quinone oxidoreductase subunit I, chloroplastic (172 aa).

4Fe-4S ferredoxin-type domains lie at 55–84 (GRIH…VDWK) and 95–124 (LNYS…MTEE). Residues C64, C67, C70, C74, C104, C107, C110, and C114 each contribute to the [4Fe-4S] cluster site.

The protein belongs to the complex I 23 kDa subunit family. In terms of assembly, NDH is composed of at least 16 different subunits, 5 of which are encoded in the nucleus. [4Fe-4S] cluster serves as cofactor.

It is found in the plastid. It localises to the chloroplast thylakoid membrane. It catalyses the reaction a plastoquinone + NADH + (n+1) H(+)(in) = a plastoquinol + NAD(+) + n H(+)(out). The enzyme catalyses a plastoquinone + NADPH + (n+1) H(+)(in) = a plastoquinol + NADP(+) + n H(+)(out). NDH shuttles electrons from NAD(P)H:plastoquinone, via FMN and iron-sulfur (Fe-S) centers, to quinones in the photosynthetic chain and possibly in a chloroplast respiratory chain. The immediate electron acceptor for the enzyme in this species is believed to be plastoquinone. Couples the redox reaction to proton translocation, and thus conserves the redox energy in a proton gradient. This Arabidopsis thaliana (Mouse-ear cress) protein is NAD(P)H-quinone oxidoreductase subunit I, chloroplastic.